The primary structure comprises 550 residues: Glucose-6-phosphate isomerase (550 aa).

E356 (proton donor) is an active-site residue. Residues H387 and K515 contribute to the active site.

The protein belongs to the GPI family.

It localises to the cytoplasm. The enzyme catalyses alpha-D-glucose 6-phosphate = beta-D-fructose 6-phosphate. It functions in the pathway carbohydrate biosynthesis; gluconeogenesis. It participates in carbohydrate degradation; glycolysis; D-glyceraldehyde 3-phosphate and glycerone phosphate from D-glucose: step 2/4. Catalyzes the reversible isomerization of glucose-6-phosphate to fructose-6-phosphate. The sequence is that of Glucose-6-phosphate isomerase from Vibrio campbellii (strain ATCC BAA-1116).